Consider the following 184-residue polypeptide: ATP synthase subunit delta (184 aa).

This sequence belongs to the ATPase delta chain family. In terms of assembly, F-type ATPases have 2 components, F(1) - the catalytic core - and F(0) - the membrane proton channel. F(1) has five subunits: alpha(3), beta(3), gamma(1), delta(1), epsilon(1). CF(0) has four main subunits: a(1), b(1), b'(1) and c(10-14). The alpha and beta chains form an alternating ring which encloses part of the gamma chain. F(1) is attached to F(0) by a central stalk formed by the gamma and epsilon chains, while a peripheral stalk is formed by the delta, b and b' chains.

It is found in the cellular thylakoid membrane. Its function is as follows. F(1)F(0) ATP synthase produces ATP from ADP in the presence of a proton or sodium gradient. F-type ATPases consist of two structural domains, F(1) containing the extramembraneous catalytic core and F(0) containing the membrane proton channel, linked together by a central stalk and a peripheral stalk. During catalysis, ATP synthesis in the catalytic domain of F(1) is coupled via a rotary mechanism of the central stalk subunits to proton translocation. This protein is part of the stalk that links CF(0) to CF(1). It either transmits conformational changes from CF(0) to CF(1) or is implicated in proton conduction. The sequence is that of ATP synthase subunit delta from Gloeothece citriformis (strain PCC 7424) (Cyanothece sp. (strain PCC 7424)).